Consider the following 313-residue polypeptide: Ketimine reductase mu-crystallin (313 aa).

Residue R47 coordinates 3,3',5-triiodo-L-thyronine. NADPH contacts are provided by S90, H91, R118, A143, V145, Q146, N167, R168, T169, N172, T204, M205, and V225. A 3,3',5-triiodo-L-thyronine-binding site is contributed by E256. S291 contacts NADPH.

This sequence belongs to the ornithine cyclodeaminase/mu-crystallin family. As to quaternary structure, homodimer. Binds the thyroid hormone triiodothyronine (T3); T3 binding inhibits enzymatic activity. In terms of tissue distribution, expressed in the spiral ligament of the cochlea (at protein level).

It localises to the cytoplasm. It catalyses the reaction L-pipecolate + NADP(+) = Delta(1)-piperideine-2-carboxylate + NADPH + H(+). It carries out the reaction L-pipecolate + NAD(+) = Delta(1)-piperideine-2-carboxylate + NADH + H(+). The catalysed reaction is L-proline + NADP(+) = 1-pyrroline-2-carboxylate + NADPH + H(+). The enzyme catalyses L-proline + NAD(+) = 1-pyrroline-2-carboxylate + NADH + H(+). It catalyses the reaction (3R)-1,4-thiomorpholine-3-carboxylate + NAD(+) = 3,4-dehydrothiomorpholine-3-carboxylate + NADH + 2 H(+). It carries out the reaction (3R)-1,4-thiomorpholine-3-carboxylate + NADP(+) = 3,4-dehydrothiomorpholine-3-carboxylate + NADPH + 2 H(+). The catalysed reaction is (S)-cystathionine ketimine + NADH + 2 H(+) = (3R,5S)-2,3,5,6,7-pentahydro-1,4-thiazepine-3,5-dicarboxylate + NAD(+). The enzyme catalyses (S)-cystathionine ketimine + NADPH + 2 H(+) = (3R,5S)-2,3,5,6,7-pentahydro-1,4-thiazepine-3,5-dicarboxylate + NADP(+). It catalyses the reaction (R)-lanthionine ketimine + NADPH + 2 H(+) = (3R,5R)-1,4-thiomorpholine-3,5-dicarboxylate + NADP(+). It carries out the reaction Delta(2)-thiazoline-2-carboxylate + NADPH + 2 H(+) = L-thiazolidine-2-carboxylate + NADP(+). Its function is as follows. Catalyzes the NAD(P)H-dependent reduction of imine double bonds of a number of cyclic ketimine substrates, including sulfur-containing cyclic ketimines. Under physiological conditions, it efficiently catalyzes delta(1)-piperideine-2-carboxylate (P2C) and delta(1)-pyrroline-2-carboxylate (Pyr2C) reduction, suggesting a central role in lysine and glutamate metabolism. Additional substrates are delta(2)-thiazoline-2-carboxylate (T2C), 3,4-dehydrothiomorpholine-3-carboxylate (AECK), and (R)-lanthionine ketimine (LK) that is reduced at very low rate compared to other substrates. Also catalyzes the NAD(P)H-dependent reduction of (S)-cystathionine ketimine (CysK). This is Ketimine reductase mu-crystallin from Mus musculus (Mouse).